A 187-amino-acid chain; its full sequence is Calcium and integrin-binding family member 2 (187 aa).

EF-hand domains lie at 66 to 101, 103 to 138, and 144 to 179; these read RENP…LCES, PREL…LTKS, and EVVL…APDF. The Ca(2+) site is built by Asp116, Asn118, Asp120, Asp127, Asp157, Asp159, Asp161, Lys163, and Asp168.

As to quaternary structure, monomer. Homodimer. Interacts with WHRN and MYO7A. Interacts with ITGA2B (via C-terminus cytoplasmic tail region); the interactions are stabilized/increased in a calcium and magnesium-dependent manner. Interacts with ITGA7 (via C-terminus cytoplasmic tail region); the interactions are stabilized/increased in a calcium and magnesium-dependent manner. Interacts with TMC1. Interacts with TMC2.

It is found in the cytoplasm. The protein resides in the cell projection. The protein localises to the stereocilium. It localises to the photoreceptor inner segment. Its subcellular location is the cilium. It is found in the photoreceptor outer segment. The protein resides in the cell membrane. The protein localises to the sarcolemma. In terms of biological role, calcium- and integrin-binding protein that plays a role in intracellular calcium homeostasis. Acts as an auxiliary subunit of the sensory mechanoelectrical transduction (MET) channel in hair cells. Essential for mechanoelectrical transduction (MET) currents in auditory hair cells and thereby required for hearing. Regulates the function of hair cell mechanotransduction by controlling the distribution of transmembrane channel-like proteins TMC1 and TMC2, and by regulating the function of the MET channels in hair cells. Required for the maintenance of auditory hair cell stereocilia bundle morphology and function and for hair-cell survival in the cochlea. Critical for proper photoreceptor cell maintenance and function. Plays a role in intracellular calcium homeostasis by decreasing ATP-induced calcium release. The chain is Calcium and integrin-binding family member 2 (Cib2) from Rattus norvegicus (Rat).